A 257-amino-acid polypeptide reads, in one-letter code: uncharacterized protein (257 aa).

2 disordered regions span residues 86–119 and 182–206; these read SDEE…RPLS and STPL…TDGQ. A compositionally biased stretch (polar residues) spans 196–206; it reads PTPTSQLTDGQ.

This is an uncharacterized protein from Invertebrate iridescent virus 3 (IIV-3).